The primary structure comprises 361 residues: Chorismate synthase (361 aa).

The NADP(+) site is built by Arg48 and Arg54. Residues 125–127 (RSS), 238–239 (NA), Gly278, 293–297 (KPTSS), and Arg319 contribute to the FMN site.

Belongs to the chorismate synthase family. In terms of assembly, homotetramer. FMNH2 is required as a cofactor.

It carries out the reaction 5-O-(1-carboxyvinyl)-3-phosphoshikimate = chorismate + phosphate. It functions in the pathway metabolic intermediate biosynthesis; chorismate biosynthesis; chorismate from D-erythrose 4-phosphate and phosphoenolpyruvate: step 7/7. Functionally, catalyzes the anti-1,4-elimination of the C-3 phosphate and the C-6 proR hydrogen from 5-enolpyruvylshikimate-3-phosphate (EPSP) to yield chorismate, which is the branch point compound that serves as the starting substrate for the three terminal pathways of aromatic amino acid biosynthesis. This reaction introduces a second double bond into the aromatic ring system. The chain is Chorismate synthase from Klebsiella pneumoniae (strain 342).